The sequence spans 681 residues: Sodium-dependent phosphate transporter 1 (681 aa).

6 helical membrane passes run 25 to 45, 66 to 86, 106 to 126, 162 to 182, 201 to 221, and 234 to 254; these read NLWM…SVGA, ACIL…AKVS, LMAG…VASF, IVMS…ILFF, ALPI…MYTG, and GTIL…WFFV. The segment at 266–295 is disordered; the sequence is VKSSPSESPLMEKKSNLKEDHEETKMAPGD. 2 positions are modified to phosphoserine: S269 and S273. A compositionally biased stretch (basic and acidic residues) spans 275–295; sequence LMEKKSNLKEDHEETKMAPGD. The helical transmembrane segment at 514–534 threads the bilayer; it reads VSLLFQFLQILTACFGSFAHG. An a region spans residues 553–560; that stretch reads KQEASTKA. Helical transmembrane passes span 561–581, 602–622, and 652–672; these read ATPI…LWVW, FSIE…GLPI, and IFMA…AIMA.

The protein belongs to the inorganic phosphate transporter (PiT) (TC 2.A.20) family. As to expression, ubiquitously expressed.

Its subcellular location is the cell membrane. It carries out the reaction 2 Na(+)(out) + phosphate(out) = 2 Na(+)(in) + phosphate(in). Its function is as follows. Sodium-phosphate symporter which preferentially transports the monovalent form of phosphate with a stoichiometry of two sodium ions per phosphate ion. May play a role in extracellular matrix and cartilage calcification as well as in vascular calcification. Essential for cell proliferation but this function is independent of its phosphate transporter activity. In terms of biological role, (Microbial infection) May function as a retroviral receptor but do not confer infection susceptibility to Gibbon Ape Leukemia Virus (GaLV), Simian sarcoma-associated virus (SSAV) and Feline leukemia virus subgroup B (FeLV-B). The polypeptide is Sodium-dependent phosphate transporter 1 (Slc20a1) (Mus musculus (Mouse)).